Reading from the N-terminus, the 161-residue chain is Dihydrofolate reductase type 1 from Tn4003 (161 aa).

The DHFR domain occupies 2 to 157 (TLSIIVAHDK…IPHTFLHLVR (156 aa)). Residue 6–8 (IVA) coordinates substrate. NADP(+)-binding positions include 7-8 (VA) and 15-20 (IGYQNQ). Aspartate 28 is a binding site for substrate. Residue 44 to 47 (ARKT) coordinates NADP(+). Residue arginine 58 participates in substrate binding. NADP(+)-binding positions include 63–66 (LTNQ) and 93–98 (FGGQTL). Threonine 112 lines the substrate pocket.

This sequence belongs to the dihydrofolate reductase family.

It catalyses the reaction (6S)-5,6,7,8-tetrahydrofolate + NADP(+) = 7,8-dihydrofolate + NADPH + H(+). It functions in the pathway cofactor biosynthesis; tetrahydrofolate biosynthesis; 5,6,7,8-tetrahydrofolate from 7,8-dihydrofolate: step 1/1. Its function is as follows. Key enzyme in folate metabolism. Catalyzes an essential reaction for de novo glycine and purine synthesis, and for DNA precursor synthesis. The protein is Dihydrofolate reductase type 1 from Tn4003 (dfrA) of Staphylococcus aureus.